Consider the following 195-residue polypeptide: Small ribosomal subunit protein uS4c (195 aa).

An S4 RNA-binding domain is found at methionine 82–asparagine 143.

This sequence belongs to the universal ribosomal protein uS4 family. In terms of assembly, part of the 30S ribosomal subunit. Contacts protein S5. The interaction surface between S4 and S5 is involved in control of translational fidelity.

Its subcellular location is the plastid. The protein resides in the chloroplast. Functionally, one of the primary rRNA binding proteins, it binds directly to 16S rRNA where it nucleates assembly of the body of the 30S subunit. Its function is as follows. With S5 and S12 plays an important role in translational accuracy. This chain is Small ribosomal subunit protein uS4c (rps4), found in Watsonia angusta.